The following is a 528-amino-acid chain: Acid-sensing ion channel 1 (528 aa).

Residues Met1 to Cys49 are Cytoplasmic-facing. A helical transmembrane segment spans residues Phe50–Gln66. At Tyr67–Glu427 the chain is on the extracellular side. Cystine bridges form between Cys93/Cys194, Cys172/Cys179, Cys290/Cys367, Cys310/Cys363, Cys314/Cys361, Cys323/Cys345, and Cys325/Cys337. 2 N-linked (GlcNAc...) asparagine glycosylation sites follow: Asn368 and Asn395. Residues Ile428–Tyr458 traverse the membrane as a discontinuously helical segment. Residues Gly444–Ser446 carry the GAS motif; ion selectivity filter motif. The Cytoplasmic portion of the chain corresponds to Glu459–Cys528. At Ser479 the chain carries Phosphoserine; by PKA. Ser499 bears the Phosphoserine mark.

The protein belongs to the amiloride-sensitive sodium channel (TC 1.A.6) family. ASIC1 subfamily. In terms of assembly, forms functional homotrimeric channels. Forms heterotrimers with other ASIC proteins, resulting in channels with distinct properties. Interacts with PICK1; regulates ASIC1 clustering in membranes. Interacts with STOM; alters heterotrimeric channels activity. In terms of processing, pH-gating could be regulated by serine proteases. Post-translationally, phosphorylation by PKA regulates interaction with PICK1 and subcellular localization. Phosphorylation by PKC may regulate the channel. In terms of tissue distribution, expressed in neurons throughout the central and peripheral nervous system.

It is found in the cell membrane. Its subcellular location is the postsynaptic cell membrane. The protein localises to the cell projection. It localises to the dendrite. The catalysed reaction is Na(+)(in) = Na(+)(out). The enzyme catalyses K(+)(in) = K(+)(out). It catalyses the reaction Li(+)(in) = Li(+)(out). It carries out the reaction Ca(2+)(in) = Ca(2+)(out). Potentiated by FMRFamide-related neuropeptides, which are induced during inflammation and modulate pain responses. Inhibited by the diuretic drug amiloride. Spider venom psalmotoxin-1 inhibits the channel by locking it in its desensitized conformation. The homotrimeric channel is inhibited by the spider venom pi-theraphotoxin-Hm3a. Homotrimeric and heterotrimeric (with ASIC2 isoform 1) channels are inhibited by the snake venom mambalgin-1, which prevents proton-induced transitions from the resting closed state to the active and/or desensitized states. Inhibited by Texas coral snake toxin MitTx1. Its function is as follows. Forms voltage-independent, pH-gated trimeric sodium channels that act as postsynaptic excitatory receptors in the nervous system, playing a crucial role in regulating synaptic plasticity, learning, and memory. Upon extracellular pH drop this channel elicits transient, fast activating, and completely desensitizing inward currents. Displays high selectivity for sodium ions but can also permit the permeation of other cations. Regulates more or less directly intracellular calcium concentration and CaMKII phosphorylation, and thereby the density of dendritic spines. Modulates neuronal activity in the circuits underlying innate fear. Functionally, has high selectivity for sodium ions, but can also be permeable to other cations including calcium, lithium and potassium. Produces acid activated currents with a reduced amplitude and inactivates faster. Has high selectivity for sodium ions but also supports a calcium-mediated current which is sustained and maintained as long as acidic conditions are present. Also potentially permeable to lithium and potassium. In terms of biological role, has no measurable proton-gated sodium channel activity in vitro. In Homo sapiens (Human), this protein is Acid-sensing ion channel 1.